Here is a 349-residue protein sequence, read N- to C-terminus: tRNA N6-adenosine threonylcarbamoyltransferase (349 aa).

Positions 116 and 120 each coordinate Fe cation. Residues 139-143, aspartate 172, glycine 185, and asparagine 283 contribute to the substrate site; that span reads LVSGG. Aspartate 311 contacts Fe cation.

It belongs to the KAE1 / TsaD family. Requires Fe(2+) as cofactor.

The protein resides in the cytoplasm. The catalysed reaction is L-threonylcarbamoyladenylate + adenosine(37) in tRNA = N(6)-L-threonylcarbamoyladenosine(37) in tRNA + AMP + H(+). Functionally, required for the formation of a threonylcarbamoyl group on adenosine at position 37 (t(6)A37) in tRNAs that read codons beginning with adenine. Is involved in the transfer of the threonylcarbamoyl moiety of threonylcarbamoyl-AMP (TC-AMP) to the N6 group of A37, together with TsaE and TsaB. TsaD likely plays a direct catalytic role in this reaction. This is tRNA N6-adenosine threonylcarbamoyltransferase from Colwellia psychrerythraea (strain 34H / ATCC BAA-681) (Vibrio psychroerythus).